A 264-amino-acid chain; its full sequence is uncharacterized protein (264 aa).

A helical membrane pass occupies residues 7-27 (LTLGICLVLLIILIVGYVIMT).

Belongs to the staphylococcal tandem lipoprotein family.

It is found in the cell membrane. This is an uncharacterized protein from Staphylococcus aureus (strain MW2).